The primary structure comprises 186 residues: dCTP deaminase, dUMP-forming (186 aa).

Residues 99-104 (KSSIAR), aspartate 117, 125-127 (TLE), glutamine 146, tyrosine 159, lysine 166, and glutamine 170 each bind dCTP. Glutamate 127 serves as the catalytic Proton donor/acceptor.

It belongs to the dCTP deaminase family. As to quaternary structure, homotrimer.

It carries out the reaction dCTP + 2 H2O = dUMP + NH4(+) + diphosphate. It participates in pyrimidine metabolism; dUMP biosynthesis; dUMP from dCTP: step 1/1. Its function is as follows. Bifunctional enzyme that catalyzes both the deamination of dCTP to dUTP and the hydrolysis of dUTP to dUMP without releasing the toxic dUTP intermediate. The protein is dCTP deaminase, dUMP-forming of Methanosphaerula palustris (strain ATCC BAA-1556 / DSM 19958 / E1-9c).